A 461-amino-acid polypeptide reads, in one-letter code: D-phenylhydantoinase (461 aa).

Positions 59, 61, and 151 each coordinate a divalent metal cation. Lys-151 is subject to N6-carboxylysine. Tyr-156 contacts substrate. Positions 182 and 239 each coordinate a divalent metal cation. Ser-286 contributes to the substrate binding site. Asp-313 is an a divalent metal cation binding site. Asn-335 is a substrate binding site.

The protein belongs to the metallo-dependent hydrolases superfamily. Hydantoinase/dihydropyrimidinase family. As to quaternary structure, homotetramer. A divalent metal cation is required as a cofactor. Carboxylation allows a single lysine to coordinate two divalent metal cations.

It catalyses the reaction D-5-phenylhydantoin + H2O = N-carbamoyl-D-phenylglycine + H(+). Functionally, catalyzes the stereospecific hydrolysis of the cyclic amide bond of D-hydantoin derivatives with an aromatic side chains at the 5'-position. Has no activity on dihydropyrimidines. The physiological function is unknown. The chain is D-phenylhydantoinase from Escherichia coli (strain SE11).